The sequence spans 366 residues: DNA replication and repair protein RecF (366 aa).

G30 to T37 serves as a coordination point for ATP.

It belongs to the RecF family.

It localises to the cytoplasm. The RecF protein is involved in DNA metabolism; it is required for DNA replication and normal SOS inducibility. RecF binds preferentially to single-stranded, linear DNA. It also seems to bind ATP. The sequence is that of DNA replication and repair protein RecF from Streptococcus thermophilus (strain ATCC BAA-250 / LMG 18311).